We begin with the raw amino-acid sequence, 310 residues long: Tagatose-6-phosphate kinase (310 aa).

Belongs to the carbohydrate kinase PfkB family. LacC subfamily.

The enzyme catalyses D-tagatofuranose 6-phosphate + ATP = D-tagatofuranose 1,6-bisphosphate + ADP + H(+). The protein operates within carbohydrate metabolism; D-tagatose 6-phosphate degradation; D-glyceraldehyde 3-phosphate and glycerone phosphate from D-tagatose 6-phosphate: step 1/2. The polypeptide is Tagatose-6-phosphate kinase (Streptococcus agalactiae serotype V (strain ATCC BAA-611 / 2603 V/R)).